Consider the following 355-residue polypeptide: Peptide chain release factor 1 (355 aa).

Position 231 is an N5-methylglutamine (Q231). Over residues 283–292 the composition is skewed to basic and acidic residues; sequence LAKETSERKS. A disordered region spans residues 283–306; sequence LAKETSERKSQVGTGDRSGRIRTY.

Belongs to the prokaryotic/mitochondrial release factor family. In terms of processing, methylated by PrmC. Methylation increases the termination efficiency of RF1.

Its subcellular location is the cytoplasm. Peptide chain release factor 1 directs the termination of translation in response to the peptide chain termination codons UAG and UAA. In Campylobacter concisus (strain 13826), this protein is Peptide chain release factor 1.